We begin with the raw amino-acid sequence, 1500 residues long: Carbamoyl-phosphate synthase [ammonia], mitochondrial (1500 aa).

The transit peptide at 1–38 (MTRILTACKVVKTLKSGFGFANVTTKRQWDFSRPGIRL) directs the protein to the mitochondrion. The tract at residues 39–218 (LSVKAKTAHI…VKVFGKGNPT (180 aa)) is anthranilate phosphoribosyltransferase homolog. An N6-acetyllysine; alternate mark is found at lysine 44, lysine 55, lysine 57, and lysine 119. N6-succinyllysine; alternate occurs at positions 44, 55, 57, and 119. Lysine 55 carries the N6-glutaryllysine; alternate modification. Residue serine 148 is modified to Phosphoserine. An N6-acetyllysine; alternate mark is found at lysine 157 and lysine 171. Residue lysine 157 is modified to N6-succinyllysine; alternate. Residue lysine 171 is modified to N6-glutaryllysine; alternate. Lysine 176 is modified (N6-glutaryllysine). At lysine 182 the chain carries N6-acetyllysine. The residue at position 189 (serine 189) is a Phosphoserine. Lysine 197 is modified (N6-acetyllysine). Residues lysine 207, lysine 210, lysine 214, lysine 219, and lysine 228 each carry the N6-acetyllysine; alternate modification. Lysine 207 is subject to N6-succinyllysine; alternate. N6-glutaryllysine; alternate is present on residues lysine 207, lysine 210, lysine 214, lysine 219, and lysine 228. At lysine 214 the chain carries N6-succinyllysine; alternate. The region spanning 219–404 (KVVAVDCGIK…FSLIKKGKGT (186 aa)) is the Glutamine amidotransferase type-1 domain. Residue lysine 237 is modified to N6-glutaryllysine. Residue lysine 279 is modified to N6-acetyllysine. Lysine 280, lysine 287, lysine 307, and lysine 310 each carry N6-acetyllysine; alternate. An N6-glutaryllysine; alternate modification is found at lysine 280. N6-succinyllysine; alternate is present on residues lysine 287 and lysine 307. N6-glutaryllysine; alternate is present on residues lysine 307 and lysine 310. Lysine 400 carries the N6-succinyllysine modification. N6-succinyllysine; alternate is present on residues lysine 402 and lysine 412. N6-glutaryllysine; alternate occurs at positions 402, 412, 453, and 458. Residues lysine 412, lysine 453, lysine 458, lysine 522, lysine 527, and lysine 532 each carry the N6-acetyllysine; alternate modification. N6-succinyllysine; alternate is present on residues lysine 458, lysine 522, and lysine 527. N6-glutaryllysine; alternate is present on residues lysine 527 and lysine 532. Phosphoserine; alternate is present on serine 537. Serine 537 is a glycosylation site (O-linked (GlcNAc) serine; alternate). Position 540 is a phosphoserine (serine 540). Residues 551–743 (SDKLNEINEK…LAFIAAKIAL (193 aa)) enclose the ATP-grasp 1 domain. An N6-acetyllysine; alternate mark is found at lysine 553 and lysine 560. N6-succinyllysine; alternate occurs at positions 553 and 560. Lysine 553 bears the N6-glutaryllysine; alternate mark. Residue serine 569 is modified to Phosphoserine. Lysine 575, lysine 603, and lysine 612 each carry N6-acetyllysine; alternate. Residues lysine 575, lysine 603, and lysine 612 each carry the N6-succinyllysine; alternate modification. At lysine 630 the chain carries N6-acetyllysine. Lysine 728 carries the post-translational modification N6-glutaryllysine. N6-acetyllysine; alternate is present on residues lysine 751, lysine 757, lysine 772, lysine 793, lysine 811, lysine 831, lysine 840, lysine 841, lysine 856, lysine 875, lysine 889, and lysine 892. N6-succinyllysine; alternate occurs at positions 751 and 757. Residues lysine 757, lysine 772, lysine 793, and lysine 811 each carry the N6-glutaryllysine; alternate modification. N6-succinyllysine; alternate is present on lysine 793. N6-succinyllysine; alternate is present on residues lysine 831 and lysine 840. 5 positions are modified to N6-glutaryllysine; alternate: lysine 841, lysine 856, lysine 875, lysine 889, and lysine 892. 3 positions are modified to N6-succinyllysine; alternate: lysine 875, lysine 889, and lysine 892. 2 positions are modified to phosphoserine: serine 896 and serine 898. An N6-acetyllysine; alternate mark is found at lysine 908, lysine 915, and lysine 919. N6-glutaryllysine; alternate is present on residues lysine 908, lysine 915, and lysine 919. N6-succinyllysine; alternate is present on residues lysine 915 and lysine 919. The residue at position 935 (lysine 935) is an N6-acetyllysine. Serine 1036 bears the Phosphoserine mark. Lysine 1074 bears the N6-acetyllysine; alternate mark. Lysine 1074 carries the post-translational modification N6-succinyllysine; alternate. Lysine 1074 is modified (N6-glutaryllysine; alternate). Residues serine 1079, serine 1090, and serine 1093 each carry the phosphoserine modification. Positions 1093-1284 (SAVLDELKVA…FIDVATKVMI (192 aa)) constitute an ATP-grasp 2 domain. Lysine 1100 bears the N6-acetyllysine; alternate mark. The residue at position 1100 (lysine 1100) is an N6-succinyllysine; alternate. Lysine 1149 carries the N6-succinyllysine modification. Residues lysine 1168 and lysine 1183 each carry the N6-acetyllysine; alternate modification. N6-succinyllysine; alternate occurs at positions 1168 and 1183. N6-glutaryllysine; alternate occurs at positions 1168 and 1183. Serine 1203 carries the phosphoserine modification. Lysine 1222 carries the post-translational modification N6-acetyllysine. Lysine 1224 carries the post-translational modification N6-glutaryllysine. An N6-acetyllysine; alternate mark is found at lysine 1232, lysine 1269, and lysine 1291. N6-succinyllysine; alternate is present on residues lysine 1232, lysine 1269, and lysine 1291. An O-linked (GlcNAc) serine glycan is attached at serine 1331. Threonine 1332 carries an O-linked (GlcNAc) threonine glycan. Residues 1355–1500 (FKIPQKGILI…YRQYSAGKAA (146 aa)) form the MGS-like domain. Lysine 1356 bears the N6-acetyllysine; alternate mark. Residues lysine 1356 and lysine 1360 each carry the N6-succinyllysine; alternate modification. Lysine 1356 and lysine 1360 each carry N6-glutaryllysine; alternate. N-acetyl-L-glutamate contacts are provided by threonine 1391, threonine 1394, and tryptophan 1410. 2 positions are modified to phosphoserine: serine 1419 and serine 1431. The N-acetyl-L-glutamate site is built by asparagine 1437 and asparagine 1440. Lysine 1444 bears the N6-acetyllysine; alternate mark. Lysine 1444 bears the N6-succinyllysine; alternate mark. Asparagine 1449 contacts N-acetyl-L-glutamate. Lysine 1471, lysine 1479, and lysine 1486 each carry N6-acetyllysine; alternate. Residues lysine 1471, lysine 1479, and lysine 1486 each carry the N6-succinyllysine; alternate modification. Residues lysine 1479 and lysine 1486 each carry the N6-glutaryllysine; alternate modification.

In terms of assembly, can form homooligomers (monomers as predominant form and dimers). (Microbial infection) Interacts with P.berghei (ANKA strain) phospholipid scramblase PLSCR; the interaction is involved in the interaction between parasite sporozoites and host hepatocytes. In terms of processing, undergoes proteolytic cleavage in the C-terminal region corresponding to the loss of approximately 12 AA residues from the C-terminus. Post-translationally, acetylation of Lys-287, Lys-603, Lys-841 and Lys-1291 is observed in liver mitochondria from fasted mice but not from fed mice. Succinylated at Lys-44, Lys-287 and Lys-1291. Desuccinylated at Lys-1291 by SIRT5, leading to activation. In terms of processing, glutarylated. Glutarylation levels increase during fasting. Deglutarylated by SIRT5 at Lys-55, Lys-219, Lys-412, Lys-889, Lys-892, Lys-915, Lys-1360 and Lys-1486, leading to activation. In terms of tissue distribution, expressed in hepatocytes (at protein level).

The protein resides in the mitochondrion. Its subcellular location is the nucleus. It localises to the nucleolus. It is found in the cell membrane. It carries out the reaction hydrogencarbonate + NH4(+) + 2 ATP = carbamoyl phosphate + 2 ADP + phosphate + 2 H(+). Requires N-acetyl-L-glutamate (NAG) as an allosteric activator. Functionally, involved in the urea cycle of ureotelic animals where the enzyme plays an important role in removing excess ammonia from the cell. This chain is Carbamoyl-phosphate synthase [ammonia], mitochondrial (Cps1), found in Mus musculus (Mouse).